The sequence spans 502 residues: Aspartyl/glutamyl-tRNA(Asn/Gln) amidotransferase subunit B (502 aa).

This sequence belongs to the GatB/GatE family. GatB subfamily. As to quaternary structure, heterotrimer of A, B and C subunits.

The enzyme catalyses L-glutamyl-tRNA(Gln) + L-glutamine + ATP + H2O = L-glutaminyl-tRNA(Gln) + L-glutamate + ADP + phosphate + H(+). It catalyses the reaction L-aspartyl-tRNA(Asn) + L-glutamine + ATP + H2O = L-asparaginyl-tRNA(Asn) + L-glutamate + ADP + phosphate + 2 H(+). In terms of biological role, allows the formation of correctly charged Asn-tRNA(Asn) or Gln-tRNA(Gln) through the transamidation of misacylated Asp-tRNA(Asn) or Glu-tRNA(Gln) in organisms which lack either or both of asparaginyl-tRNA or glutaminyl-tRNA synthetases. The reaction takes place in the presence of glutamine and ATP through an activated phospho-Asp-tRNA(Asn) or phospho-Glu-tRNA(Gln). In Arthrobacter sp. (strain FB24), this protein is Aspartyl/glutamyl-tRNA(Asn/Gln) amidotransferase subunit B.